The primary structure comprises 288 residues: F420-non-reducing hydrogenase vhu subunit G (288 aa).

It belongs to the [NiFe]/[NiFeSe] hydrogenase small subunit family. In terms of assembly, the F420-non-reducing hydrogenase vhu is composed of four subunits; VhuA, VhuD, VhuG and VhuU.

The polypeptide is F420-non-reducing hydrogenase vhu subunit G (vhuG) (Methanocaldococcus jannaschii (strain ATCC 43067 / DSM 2661 / JAL-1 / JCM 10045 / NBRC 100440) (Methanococcus jannaschii)).